An 89-amino-acid polypeptide reads, in one-letter code: Acylphosphatase (89 aa).

Residues 3 to 89 enclose the Acylphosphatase-like domain; that stretch reads RKEFLVSGRV…DTREKRFSTY (87 aa). Residues R18 and N36 contribute to the active site.

This sequence belongs to the acylphosphatase family.

It catalyses the reaction an acyl phosphate + H2O = a carboxylate + phosphate + H(+). The polypeptide is Acylphosphatase (acyP) (Clostridium perfringens (strain ATCC 13124 / DSM 756 / JCM 1290 / NCIMB 6125 / NCTC 8237 / Type A)).